The following is a 343-amino-acid chain: Cell cycle control protein 50C (343 aa).

Over 1–34 (MKRKCQDYESRLPDNTAVKQQQLPAFRLQLTASE) the chain is Cytoplasmic. A helical membrane pass occupies residues 35-55 (ILSGFFAIGLFCLGMGIILLL). The Extracellular portion of the chain corresponds to 56-306 (SAKSIKEVEI…STLTWSGGSS (251 aa)). N-linked (GlcNAc...) asparagine glycans are attached at residues Asn66, Asn164, Asn205, and Asn265. Residues 307–327 (LFLALAYLVTGAVTLLASFSM) form a helical membrane-spanning segment. Topologically, residues 328-343 (MALHLKLKERKTFFLQ) are cytoplasmic.

It belongs to the CDC50/LEM3 family.

The protein localises to the membrane. The protein is Cell cycle control protein 50C (TMEM30C) of Bos taurus (Bovine).